A 513-amino-acid polypeptide reads, in one-letter code: ATP synthase subunit alpha 1 (513 aa).

Position 169 to 176 (169 to 176 (GDRQCGKT)) interacts with ATP.

It belongs to the ATPase alpha/beta chains family. As to quaternary structure, F-type ATPases have 2 components, CF(1) - the catalytic core - and CF(0) - the membrane proton channel. CF(1) has five subunits: alpha(3), beta(3), gamma(1), delta(1), epsilon(1). CF(0) has three main subunits: a(1), b(2) and c(9-12). The alpha and beta chains form an alternating ring which encloses part of the gamma chain. CF(1) is attached to CF(0) by a central stalk formed by the gamma and epsilon chains, while a peripheral stalk is formed by the delta and b chains.

The protein resides in the cell inner membrane. The enzyme catalyses ATP + H2O + 4 H(+)(in) = ADP + phosphate + 5 H(+)(out). Produces ATP from ADP in the presence of a proton gradient across the membrane. The alpha chain is a regulatory subunit. This chain is ATP synthase subunit alpha 1, found in Burkholderia thailandensis (strain ATCC 700388 / DSM 13276 / CCUG 48851 / CIP 106301 / E264).